A 156-amino-acid chain; its full sequence is 6,7-dimethyl-8-ribityllumazine synthase (156 aa).

Residues Phe23, 57-59 (SFE), and 81-83 (AVI) each bind 5-amino-6-(D-ribitylamino)uracil. 86 to 87 (GT) is a (2S)-2-hydroxy-3-oxobutyl phosphate binding site. The Proton donor role is filled by His89. Tyr114 contacts 5-amino-6-(D-ribitylamino)uracil. Arg128 provides a ligand contact to (2S)-2-hydroxy-3-oxobutyl phosphate.

The protein belongs to the DMRL synthase family. As to quaternary structure, forms an icosahedral capsid composed of 60 subunits, arranged as a dodecamer of pentamers.

It carries out the reaction (2S)-2-hydroxy-3-oxobutyl phosphate + 5-amino-6-(D-ribitylamino)uracil = 6,7-dimethyl-8-(1-D-ribityl)lumazine + phosphate + 2 H2O + H(+). It participates in cofactor biosynthesis; riboflavin biosynthesis; riboflavin from 2-hydroxy-3-oxobutyl phosphate and 5-amino-6-(D-ribitylamino)uracil: step 1/2. Catalyzes the formation of 6,7-dimethyl-8-ribityllumazine by condensation of 5-amino-6-(D-ribitylamino)uracil with 3,4-dihydroxy-2-butanone 4-phosphate. This is the penultimate step in the biosynthesis of riboflavin. The polypeptide is 6,7-dimethyl-8-ribityllumazine synthase (Halorhodospira halophila (strain DSM 244 / SL1) (Ectothiorhodospira halophila (strain DSM 244 / SL1))).